The chain runs to 485 residues: Glycogen synthase (485 aa).

Residue lysine 15 coordinates ADP-alpha-D-glucose.

Belongs to the glycosyltransferase 1 family. Bacterial/plant glycogen synthase subfamily.

It catalyses the reaction [(1-&gt;4)-alpha-D-glucosyl](n) + ADP-alpha-D-glucose = [(1-&gt;4)-alpha-D-glucosyl](n+1) + ADP + H(+). The protein operates within glycan biosynthesis; glycogen biosynthesis. Its function is as follows. Synthesizes alpha-1,4-glucan chains using ADP-glucose. This Francisella philomiragia subsp. philomiragia (strain ATCC 25017 / CCUG 19701 / FSC 153 / O#319-036) protein is Glycogen synthase.